A 796-amino-acid polypeptide reads, in one-letter code: Protocadherin beta-3 (796 aa).

Positions 1 to 26 (MEAGGERFLRQRQVLLLFVFLGGSLA) are cleaved as a signal peptide. The Extracellular portion of the chain corresponds to 27-690 (GSESRRYSVA…AQADLLTVYL (664 aa)). Cadherin domains lie at 35–133 (VAEE…SPVF), 138–242 (MHLK…APEF), 247–347 (YEVA…PPEL), 352–451 (VNSP…APAF), and 456–561 (YTLF…SPFV). An N-linked (GlcNAc...) asparagine glycan is attached at asparagine 169. N-linked (GlcNAc...) asparagine glycans are attached at residues asparagine 418 and asparagine 436. The N-linked (GlcNAc...) asparagine glycan is linked to asparagine 567. The Cadherin 6 domain occupies 568-671 (GSAPCTELVP…LVDGFSQPYL (104 aa)). Residues 691–711 (VVALASVSSLFLFSVLLFVAV) form a helical membrane-spanning segment. Residues 712 to 796 (RLCRRSRAAS…PSFRKSFEFS (85 aa)) lie on the Cytoplasmic side of the membrane.

The protein localises to the cell membrane. Potential calcium-dependent cell-adhesion protein. May be involved in the establishment and maintenance of specific neuronal connections in the brain. The chain is Protocadherin beta-3 (PCDHB3) from Homo sapiens (Human).